A 249-amino-acid polypeptide reads, in one-letter code: Coproheme decarboxylase (249 aa).

Fe-coproporphyrin III is bound by residues Arg131, Tyr145–Lys149, His172, Gln185, and Ser223. The active site involves Tyr145.

The protein belongs to the ChdC family. Type 1 subfamily. Fe-coproporphyrin III serves as cofactor.

The catalysed reaction is Fe-coproporphyrin III + 2 H2O2 + 2 H(+) = heme b + 2 CO2 + 4 H2O. The enzyme catalyses Fe-coproporphyrin III + H2O2 + H(+) = harderoheme III + CO2 + 2 H2O. It catalyses the reaction harderoheme III + H2O2 + H(+) = heme b + CO2 + 2 H2O. Its pathway is porphyrin-containing compound metabolism; protoheme biosynthesis. Functionally, involved in coproporphyrin-dependent heme b biosynthesis. Catalyzes the decarboxylation of Fe-coproporphyrin III (coproheme) to heme b (protoheme IX), the last step of the pathway. The reaction occurs in a stepwise manner with a three-propionate intermediate. The polypeptide is Coproheme decarboxylase (Halalkalibacterium halodurans (strain ATCC BAA-125 / DSM 18197 / FERM 7344 / JCM 9153 / C-125) (Bacillus halodurans)).